The chain runs to 852 residues: Pentatricopeptide repeat-containing protein At5g02830, chloroplastic (852 aa).

The transit peptide at 1 to 25 (MRDFVIVFGSSSAITNPHHHHRRCY) directs the protein to the chloroplast. A disordered region spans residues 17-60 (PHHHHRRCYATAPESNRKTKSNSSFTKLLPSLPQQHSPSPASVS). Over residues 44-58 (LLPSLPQQHSPSPAS) the composition is skewed to low complexity. 8 PPR repeats span residues 334–364 (DMTS…AKRM), 373–407 (DAFT…GVTP), 408–442 (NTHT…GCEP), 443–477 (NSQC…SVNE), 525–557 (TTAT…GLSP), 558–592 (NQIT…GTRP), 593–627 (DVVA…QIKP), and 628–665 (NWVT…GYKP).

It belongs to the PPR family. P subfamily.

The protein resides in the plastid. The protein localises to the chloroplast. The protein is Pentatricopeptide repeat-containing protein At5g02830, chloroplastic of Arabidopsis thaliana (Mouse-ear cress).